A 257-amino-acid chain; its full sequence is Hydroxyacylglutathione hydrolase (257 aa).

Zn(2+)-binding residues include H54, H56, D58, H59, H113, D137, and H175.

This sequence belongs to the metallo-beta-lactamase superfamily. Glyoxalase II family. In terms of assembly, monomer. Zn(2+) is required as a cofactor.

The catalysed reaction is an S-(2-hydroxyacyl)glutathione + H2O = a 2-hydroxy carboxylate + glutathione + H(+). Its pathway is secondary metabolite metabolism; methylglyoxal degradation; (R)-lactate from methylglyoxal: step 2/2. Functionally, thiolesterase that catalyzes the hydrolysis of S-D-lactoyl-glutathione to form glutathione and D-lactic acid. In Gloeothece citriformis (strain PCC 7424) (Cyanothece sp. (strain PCC 7424)), this protein is Hydroxyacylglutathione hydrolase.